We begin with the raw amino-acid sequence, 523 residues long: Putative glycerol-3-phosphate transporter 1 (523 aa).

A run of 12 helical transmembrane segments spans residues Leu29–Tyr49, Val102–Ala122, Ile133–Tyr153, Phe163–Ala183, Leu196–Ala216, Phe228–Val248, Phe306–Phe326, Gly344–Ile364, Ile368–Phe388, Ser402–Val422, Ala444–Ile464, and Gly468–Leu488.

It belongs to the major facilitator superfamily. Organophosphate:Pi antiporter (OPA) (TC 2.A.1.4) family.

It is found in the membrane. The sequence is that of Putative glycerol-3-phosphate transporter 1 from Arabidopsis thaliana (Mouse-ear cress).